Consider the following 129-residue polypeptide: uncharacterized protein (129 aa).

The helical transmembrane segment at 103-125 (AISSAFQYGLSTSNFFFIFLYIF) threads the bilayer.

The protein resides in the membrane. This is an uncharacterized protein from Acanthamoeba polyphaga (Amoeba).